A 320-amino-acid polypeptide reads, in one-letter code: Ferrochelatase (320 aa).

Fe cation is bound by residues H194 and E275.

Belongs to the ferrochelatase family. In terms of assembly, monomer.

The protein localises to the cytoplasm. The enzyme catalyses heme b + 2 H(+) = protoporphyrin IX + Fe(2+). It functions in the pathway porphyrin-containing compound metabolism; protoheme biosynthesis; protoheme from protoporphyrin-IX: step 1/1. Functionally, catalyzes the ferrous insertion into protoporphyrin IX. In Escherichia coli (strain K12 / MC4100 / BW2952), this protein is Ferrochelatase.